The chain runs to 139 residues: MARRQRKAIKSEINIVPFLDVLLVLVLIFMATAPIISQSVQVELPDSVQSQEVSNEDKVPVILEVAGIGKYAISIGGERQEGLTEEMVTQLSRQEFDKDNNTLFLVGGAKEVPYEEVIKALNLLHLAGIKSVGLMTNPI.

The helical transmembrane segment at 15 to 35 threads the bilayer; it reads IVPFLDVLLVLVLIFMATAPI.

The protein belongs to the ExbD/TolR family. As to quaternary structure, the Tol-Pal system is composed of five core proteins: the inner membrane proteins TolA, TolQ and TolR, the periplasmic protein TolB and the outer membrane protein Pal. They form a network linking the inner and outer membranes and the peptidoglycan layer.

It localises to the cell inner membrane. Functionally, part of the Tol-Pal system, which plays a role in outer membrane invagination during cell division and is important for maintaining outer membrane integrity. The polypeptide is Tol-Pal system protein TolR (Haemophilus influenzae (strain ATCC 51907 / DSM 11121 / KW20 / Rd)).